Reading from the N-terminus, the 739-residue chain is Tegument protein UL47 (739 aa).

Positions 1-13 (MDAARDGRPERRR) are enriched in basic and acidic residues. Disordered regions lie at residues 1–123 (MDAA…QDYL) and 154–198 (QFPP…DDAA). The short motif at 10-30 (ERRRAVSGTYRTHPFQRPSAR) is the Nuclear localization signal element. Positions 28–53 (SARRSAGRPARCGRRGRGAPRVRRPR) are enriched in basic residues. Acidic residues predominate over residues 62–87 (EDTSEDENVYDYIDGDSSDSADDYDS). Positions 94-121 (RGPNHGAGDAMDTDAPPERAPEGGAPQD) match the Nuclear export signal motif. The Nuclear export signal motif lies at 483-493 (LSAYLTLFVAL).

It belongs to the alphaherpesvirinae HHV-1 UL47 family. In terms of assembly, interacts with US3 kinase. Interacts with UL31 and UL34; these interactions seem important for efficient virion nuclear egress. Interacts with UL41/VHS. Interacts with host DDB1. In terms of processing, monoubiquitinated. Phosphorylated by US3. This phosphorylation is required for proper nuclear localization.

Its subcellular location is the virion tegument. It localises to the host nucleus. It is found in the host cytoplasm. Tegument protein that can bind to various RNA transcripts. Plays a role in the attenuation of selective viral and cellular mRNA degradation by modulating the activity of host shutoff RNase UL41/VHS. Also plays a role in the primary envelopment of virions in the perinuclear space, probably by interacting with two nuclear egress proteins UL31 and UL34. This chain is Tegument protein UL47, found in Bovine herpesvirus 1.1 (strain Cooper) (BoHV-1).